Here is a 1237-residue protein sequence, read N- to C-terminus: Rho guanine nucleotide exchange factor 10-like protein (1237 aa).

Disordered regions lie at residues 1–117 (MASS…SSRR) and 132–203 (YDDV…QPKM). Residues 25-45 (EAEDDPGEGFEFDDSDDDEDT) are compositionally biased toward acidic residues. Position 39 is a phosphoserine (serine 39). Phosphotyrosine occurs at positions 132 and 153. 2 stretches are compositionally biased toward basic and acidic residues: residues 146 to 163 (EAER…RAPQ) and 184 to 194 (EEAKPEAEPTK). Serine 241 carries the post-translational modification Phosphoserine. Residues 276–463 (VRRHILGSIV…ETLAEKLNEQ (188 aa)) enclose the DH domain. Disordered regions lie at residues 1091-1118 (QEEA…PASH) and 1142-1164 (PGPL…HSEE).

Interacts with RHOA, RHOB and RHOC.

It localises to the cytoplasm. Its function is as follows. Acts as a guanine nucleotide exchange factor (GEF) for RHOA, RHOB and RHOC. The polypeptide is Rho guanine nucleotide exchange factor 10-like protein (ARHGEF10L) (Bos taurus (Bovine)).